Consider the following 716-residue polypeptide: Polyribonucleotide nucleotidyltransferase (716 aa).

2 residues coordinate Mg(2+): Asp495 and Asp501. Residues 562–621 enclose the KH domain; the sequence is PRLFRIQINPEQIGLVIGPGGKTIRSITEQTGAKIDIEDTGAVTISAVDADSALRAKSII. Residues 631–699 form the S1 motif domain; sequence GDVYIGKVTR…QKGRVNLTRK (69 aa).

This sequence belongs to the polyribonucleotide nucleotidyltransferase family. The cofactor is Mg(2+).

It localises to the cytoplasm. The catalysed reaction is RNA(n+1) + phosphate = RNA(n) + a ribonucleoside 5'-diphosphate. In terms of biological role, involved in mRNA degradation. Catalyzes the phosphorolysis of single-stranded polyribonucleotides processively in the 3'- to 5'-direction. In Synechococcus elongatus (strain ATCC 33912 / PCC 7942 / FACHB-805) (Anacystis nidulans R2), this protein is Polyribonucleotide nucleotidyltransferase.